Reading from the N-terminus, the 375-residue chain is Glucokinase 1 (375 aa).

Position 25-30 (25-30) interacts with ATP; it reads CDVGGS.

This sequence belongs to the bacterial glucokinase family. Monomer. The N-terminus is blocked.

It carries out the reaction D-glucose + ATP = D-glucose 6-phosphate + ADP + H(+). In Trichomonas vaginalis, this protein is Glucokinase 1 (GK1).